Consider the following 186-residue polypeptide: Ribosome maturation factor RimM (186 aa).

In terms of domain architecture, PRC barrel spans 100-182 (NEGEYHVSDL…RIEINPPVGL (83 aa)).

The protein belongs to the RimM family. In terms of assembly, binds ribosomal protein uS19.

The protein localises to the cytoplasm. In terms of biological role, an accessory protein needed during the final step in the assembly of 30S ribosomal subunit, possibly for assembly of the head region. Essential for efficient processing of 16S rRNA. May be needed both before and after RbfA during the maturation of 16S rRNA. It has affinity for free ribosomal 30S subunits but not for 70S ribosomes. In Rippkaea orientalis (strain PCC 8801 / RF-1) (Cyanothece sp. (strain PCC 8801)), this protein is Ribosome maturation factor RimM.